The sequence spans 444 residues: Ribosomal protein uS12 methylthiotransferase RimO (444 aa).

Positions 6–116 (PNIGFVSLGC…VMEHVHKYVP (111 aa)) constitute an MTTase N-terminal domain. Residues Cys-15, Cys-51, Cys-80, Cys-148, Cys-152, and Cys-155 each coordinate [4Fe-4S] cluster. The Radical SAM core domain occupies 134–375 (LTPKHYAYLK…MQLQQEISAA (242 aa)). One can recognise a TRAM domain in the interval 378–444 (QQKIGKTWKV…ADEYDLWGTC (67 aa)).

Belongs to the methylthiotransferase family. RimO subfamily. [4Fe-4S] cluster is required as a cofactor.

The protein resides in the cytoplasm. It carries out the reaction L-aspartate(89)-[ribosomal protein uS12]-hydrogen + (sulfur carrier)-SH + AH2 + 2 S-adenosyl-L-methionine = 3-methylsulfanyl-L-aspartate(89)-[ribosomal protein uS12]-hydrogen + (sulfur carrier)-H + 5'-deoxyadenosine + L-methionine + A + S-adenosyl-L-homocysteine + 2 H(+). Catalyzes the methylthiolation of an aspartic acid residue of ribosomal protein uS12. This is Ribosomal protein uS12 methylthiotransferase RimO from Actinobacillus succinogenes (strain ATCC 55618 / DSM 22257 / CCUG 43843 / 130Z).